Consider the following 309-residue polypeptide: Olfactory receptor 1A1 (309 aa).

Residues 1–25 (MRENNQSSTLEFILLGVTGQQEQED) are Extracellular-facing. The N-linked (GlcNAc...) asparagine glycan is linked to asparagine 5. The chain crosses the membrane as a helical span at residues 26-49 (FFYILFLFIYPITLIGNLLIVLAI). Residues 50–57 (CSDVRLHN) are Cytoplasmic-facing. Residues 58-79 (PMYFLLANLSLVDIFFSSVTIP) form a helical membrane-spanning segment. Topologically, residues 80 to 100 (KMLANHLLGSKSISFGGCLTQ) are extracellular. Cysteine 97 and cysteine 189 are disulfide-bonded. A helical transmembrane segment spans residues 101-120 (MYFMIALGNTDSYILAAMAY). Residues 121-139 (DRAVAISRPLHYTTIMSPR) lie on the Cytoplasmic side of the membrane. The chain crosses the membrane as a helical span at residues 140 to 158 (SCIWLIAGSWVIGNANALP). Residues 159–195 (HTLLTASLSFCGNQEVANFYCDITPLLKLSCSDIHFH) are Extracellular-facing. A helical membrane pass occupies residues 196-218 (VKMMYLGVGIFSVPLLCIIVSYI). Residues 219–235 (RVFSTVFQVPSTKGVLK) lie on the Cytoplasmic side of the membrane. The chain crosses the membrane as a helical span at residues 236–258 (AFSTCGSHLTVVSLYYGTVMGTY). The Extracellular portion of the chain corresponds to 259 to 270 (FRPLTNYSLKDA). N-linked (GlcNAc...) asparagine glycosylation is present at asparagine 264. Residues 271–290 (VITVMYTAVTPMLNPFIYSL) form a helical membrane-spanning segment. Residues 291–309 (RNRDMKAALRKLFNKRISS) lie on the Cytoplasmic side of the membrane.

The protein belongs to the G-protein coupled receptor 1 family.

The protein localises to the cell membrane. Odorant receptor. This Homo sapiens (Human) protein is Olfactory receptor 1A1 (OR1A1).